Here is a 188-residue protein sequence, read N- to C-terminus: Translation initiation factor IF-3 (188 aa).

It belongs to the IF-3 family. As to quaternary structure, monomer.

The protein localises to the cytoplasm. IF-3 binds to the 30S ribosomal subunit and shifts the equilibrium between 70S ribosomes and their 50S and 30S subunits in favor of the free subunits, thus enhancing the availability of 30S subunits on which protein synthesis initiation begins. The polypeptide is Translation initiation factor IF-3 (Fusobacterium nucleatum subsp. nucleatum (strain ATCC 25586 / DSM 15643 / BCRC 10681 / CIP 101130 / JCM 8532 / KCTC 2640 / LMG 13131 / VPI 4355)).